Reading from the N-terminus, the 251-residue chain is Small ribosomal subunit protein uS2 (251 aa).

Residues 232–251 (LQTGEEEMAAAEGESEQVEA) form a disordered region. Residues 235-251 (GEEEMAAAEGESEQVEA) show a composition bias toward acidic residues.

Belongs to the universal ribosomal protein uS2 family.

The sequence is that of Small ribosomal subunit protein uS2 from Geobacter metallireducens (strain ATCC 53774 / DSM 7210 / GS-15).